A 1074-amino-acid chain; its full sequence is Phospholipase D1 (1074 aa).

Residues isoleucine 81–serine 212 enclose the PX domain. In terms of domain architecture, PH spans proline 219–arginine 328. S-palmitoyl cysteine attachment occurs at residues cysteine 240 and cysteine 241. Positions tyrosine 459–arginine 486 constitute a PLD phosphodiesterase 1 domain. Positions histidine 463–alanine 928 are catalytic. 3 positions are modified to phosphoserine: serine 499, serine 561, and serine 629. In terms of domain architecture, PLD phosphodiesterase 2 spans glutamate 891–serine 918.

The protein belongs to the phospholipase D family. Interacts with PIP5K1B. In terms of tissue distribution, expressed in kidney, lung, and at a much lower levels, in brain, liver, heart, testis and spleen.

It localises to the cytoplasm. The protein localises to the perinuclear region. The protein resides in the endoplasmic reticulum membrane. It is found in the golgi apparatus membrane. Its subcellular location is the late endosome membrane. The catalysed reaction is a 1,2-diacyl-sn-glycero-3-phosphocholine + H2O = a 1,2-diacyl-sn-glycero-3-phosphate + choline + H(+). It carries out the reaction ethanol + a 1,2-diacyl-sn-glycero-3-phosphocholine = 1,2-diacyl-sn-glycero-3-phosphoethanol + choline. The enzyme catalyses 1,2-dihexadecanoyl-sn-glycero-3-phosphocholine + H2O = 1,2-dihexadecanoyl-sn-glycero-3-phosphate + choline + H(+). Its activity is regulated as follows. Stimulated by phosphatidylinositol 4,5-bisphosphate and phosphatidylinositol 3,4,5-trisphosphate, activated by the phosphokinase C-alpha, by the ADP-ribosylation factor-1 (ARF-1), and to a lesser extent by GTP-binding proteins: RHO A, RAC-1 and CDC42. Inhibited by oleate. Its function is as follows. Function as phospholipase selectivefor phosphatidylcholine. Implicated as a critical step in numerous cellular pathways, including signal transduction, membrane trafficking, and the regulation of mitosis. May be involved in the regulation of perinuclear intravesicular membrane traffic. This chain is Phospholipase D1, found in Mus musculus (Mouse).